Reading from the N-terminus, the 333-residue chain is Methionine import ATP-binding protein MetN 1 (333 aa).

Positions 2–241 constitute an ABC transporter domain; it reads ITFEGVEKVY…PETETAKSFV (240 aa). 38-45 contributes to the ATP binding site; it reads GFSGAGKS.

The protein belongs to the ABC transporter superfamily. Methionine importer (TC 3.A.1.24) family. In terms of assembly, the complex is composed of two ATP-binding proteins (MetN), two transmembrane proteins (MetI) and a solute-binding protein (MetQ).

It localises to the cell membrane. It carries out the reaction L-methionine(out) + ATP + H2O = L-methionine(in) + ADP + phosphate + H(+). The catalysed reaction is D-methionine(out) + ATP + H2O = D-methionine(in) + ADP + phosphate + H(+). Functionally, part of the ABC transporter complex MetNIQ involved in methionine import. Responsible for energy coupling to the transport system. The polypeptide is Methionine import ATP-binding protein MetN 1 (Bacillus licheniformis (strain ATCC 14580 / DSM 13 / JCM 2505 / CCUG 7422 / NBRC 12200 / NCIMB 9375 / NCTC 10341 / NRRL NRS-1264 / Gibson 46)).